A 96-amino-acid polypeptide reads, in one-letter code: Evasin P1078 (96 aa).

An N-terminal signal peptide occupies residues 1 to 28 (MAFNTITFLQWAVFVAILFNMNLHSASA). 3 cysteine pairs are disulfide-bonded: Cys-48–Cys-67, Cys-52–Cys-69, and Cys-63–Cys-80. An N-linked (GlcNAc...) asparagine glycan is attached at Asn-51. A glycan (N-linked (GlcNAc...) asparagine) is linked at Asn-74.

The protein resides in the secreted. In terms of biological role, salivary chemokine-binding protein which binds to host chemokines CXCL1, CXCL2, CXCL3, CXCL5, CXCL6, CXCL11 and CXCL13. This chain is Evasin P1078, found in Ixodes ricinus (Common tick).